A 543-amino-acid polypeptide reads, in one-letter code: Probable protein kinase UbiB (543 aa).

The Protein kinase domain maps to 123-501; it reads DFDIVPLASA…KRQQAKGQFL (379 aa). ATP contacts are provided by residues 129–137 and K152; that span reads LASASIAQV. The Proton acceptor role is filled by D287. Residues 517 to 539 form a helical membrane-spanning segment; sequence TSNITALASISAATGVTFWLLSW.

Belongs to the ABC1 family. UbiB subfamily.

It localises to the cell inner membrane. The protein operates within cofactor biosynthesis; ubiquinone biosynthesis [regulation]. In terms of biological role, is probably a protein kinase regulator of UbiI activity which is involved in aerobic coenzyme Q (ubiquinone) biosynthesis. This chain is Probable protein kinase UbiB, found in Aliivibrio salmonicida (strain LFI1238) (Vibrio salmonicida (strain LFI1238)).